The sequence spans 261 residues: Aquaporin-8 (261 aa).

The Cytoplasmic segment spans residues 1 to 36 (MSGEQTPMCSMDLPEVKVKTSMAGRCRVFWYEQYVQ). A helical membrane pass occupies residues 37-57 (PCIVELVGSALFIFIGCLSVI). C53 bears the Cysteine persulfide mark. C53 bears the Cysteine sulfenic acid (-SOH) mark. The Extracellular segment spans residues 58 to 84 (ENSPNTGLLQPALAHGLALGLIIATLG). A helical membrane pass occupies residues 85 to 105 (NISGGHFNPAVSLAVTVIGGL). Positions 92 to 94 (NPA) match the NPA 1 motif. Topologically, residues 106–107 (KT) are cytoplasmic. Residues 108-128 (MLLIPYWISQLFGGLIGAALA) form a helical membrane-spanning segment. At 129–156 (KVVSPEERFWNASGAAFAIVQEQEQVAE) the chain is on the extracellular side. An N-linked (GlcNAc...) asparagine glycan is attached at N139. Residues 157-177 (ALGIEIILTMLLVLAVCMGAV) form a helical membrane-spanning segment. Residues 178–183 (NEKTMG) lie on the Cytoplasmic side of the membrane. Residues 184 to 204 (PLAPFSIGFSVIVDILAGGSI) traverse the membrane as a helical segment. Topologically, residues 205-228 (SGACMNPARAFGPAVMAGYWDFHW) are extracellular. The NPA 2 signature appears at 210 to 212 (NPA). Residues 229-249 (IYWLGPLLAGLFVGLLIRLLI) traverse the membrane as a helical segment. Over 250–261 (GDEKTRLILKSR) the chain is Cytoplasmic.

The protein belongs to the MIP/aquaporin (TC 1.A.8) family. Post-translationally, sulfenylation at Cys-53(C53-SOH) when hydrogen peroxide flows through the AQP8 channel, making it susceptible to hydrogen sulfide produced by CBS. In terms of processing, persulfidation at Cys-53 is required to gate AQP8 channel; under stress condition, hydrogen peroxide accumulates in the cell leading to CBS activation that produces hydrogen sulfide inducing persulfidation of oxidized Cys-53 (C53-SOH). N-glycosylated. In terms of tissue distribution, expressed in placenta. Highly expressed in the epithelial layer of gall-bladders. Expressed in heart, kidney, submandibular gland, liver, small intestine, colon, testes, and epididymis. In testes, expressed in spermatogenic cells.

The protein localises to the cell membrane. The protein resides in the mitochondrion inner membrane. It is found in the apical cell membrane. It localises to the basolateral cell membrane. Its subcellular location is the smooth endoplasmic reticulum membrane. The catalysed reaction is H2O(in) = H2O(out). It carries out the reaction urea(in) = urea(out). It catalyses the reaction NH4(+)(in) = NH4(+)(out). The enzyme catalyses H2O2(out) = H2O2(in). The catalysed reaction is formamide(out) = formamide(in). It carries out the reaction methylamine(out) = methylamine(in). Reversibly gated by a two-step sulfenylation-persulfidation process in cells undergoing diverse stresses. Channel that allows the facilitated permeation of water and uncharged molecules, such as hydrogen peroxide and the neutral form of ammonia (NH3), through cellular membranes such as plasma membrane, inner mitochondrial membrane and endoplasmic reticulum membrane of several tissues. The transport of ammonia neutral form induces a parallel transport of proton, at alkaline pH when the concentration of ammonia is high. However, it is unclear whether the transport of proton takes place via the aquaporin or via an endogenous pathway. Also, may transport ammonia analogs such as formamide and methylamine, a transport favourited at basic pH due to the increase of unprotonated (neutral) form, which is expected to favor diffusion. In vitro, may be also permeable to urea but not to glycerol. Does not transport urea or glycerol. The water transport mechanism is mercury- and copper-sensitive and passive in response to osmotic driving forces. At the canicular plasma membrane, mediates the osmotic transport of water toward the bile canaliculus and facilitates the cAMP-induced bile canalicular water secretion, a process involved in bile formation. In addition, mediates the hydrogen peroxide release from hepatocyte mitochondria that modulates the SREBF2-mediated cholesterol synthesis and facilitates the mitochondrial ammonia uptake which is metabolized into urea, mainly under glucagon stimulation. In B cells, transports the CYBB-generated hydrogen peroxide from the external leaflet of the plasma membrane to the cytosol to promote B cell activation and differentiation for signal amplification. In the small intestine and colon system, mediates water transport through mitochondria and apical membrane of epithelial cells. May play an important role in the adaptive response of proximal tubule cells to acidosis possibly facilitating mitochondrial ammonia transport. This chain is Aquaporin-8, found in Mus musculus (Mouse).